Reading from the N-terminus, the 132-residue chain is uncharacterized protein (132 aa).

Residues 1-17 (MCPECFFLMLFFCGYRA) form the signal peptide. A compositionally biased stretch (low complexity) spans 25 to 39 (SSSSSSSSSSSFRSS). A disordered region spans residues 25 to 79 (SSSSSSSSSSSFRSSPAYGFSGRPPGGAGCRERSQRSCLRPGGLPSLTRNPGLQR).

This is an uncharacterized protein from Escherichia coli (strain K12).